A 199-amino-acid polypeptide reads, in one-letter code: Probable GTP-binding protein EngB (199 aa).

One can recognise an EngB-type G domain in the interval asparagine 22–glycine 196. Residues glycine 30–serine 37, glycine 57–leucine 61, aspartate 82–glycine 85, threonine 152–aspartate 155, and valine 175–asparagine 177 each bind GTP. Mg(2+) contacts are provided by serine 37 and threonine 59.

It belongs to the TRAFAC class TrmE-Era-EngA-EngB-Septin-like GTPase superfamily. EngB GTPase family. The cofactor is Mg(2+).

Necessary for normal cell division and for the maintenance of normal septation. The protein is Probable GTP-binding protein EngB of Campylobacter jejuni subsp. doylei (strain ATCC BAA-1458 / RM4099 / 269.97).